The primary structure comprises 401 residues: Large ribosomal subunit protein uL4 (401 aa).

The protein belongs to the universal ribosomal protein uL4 family.

The polypeptide is Large ribosomal subunit protein uL4 (RpL4) (Drosophila melanogaster (Fruit fly)).